Consider the following 356-residue polypeptide: S-adenosylmethionine:tRNA ribosyltransferase-isomerase (356 aa).

Belongs to the QueA family. As to quaternary structure, monomer.

Its subcellular location is the cytoplasm. It carries out the reaction 7-aminomethyl-7-carbaguanosine(34) in tRNA + S-adenosyl-L-methionine = epoxyqueuosine(34) in tRNA + adenine + L-methionine + 2 H(+). It participates in tRNA modification; tRNA-queuosine biosynthesis. In terms of biological role, transfers and isomerizes the ribose moiety from AdoMet to the 7-aminomethyl group of 7-deazaguanine (preQ1-tRNA) to give epoxyqueuosine (oQ-tRNA). The protein is S-adenosylmethionine:tRNA ribosyltransferase-isomerase of Shigella boydii serotype 18 (strain CDC 3083-94 / BS512).